The following is a 444-amino-acid chain: Signal recognition particle 54 kDa protein (444 aa).

Residues 104-111 (GLQGSGKT), 184-188 (DTAGR), and 242-245 (TKLD) contribute to the GTP site.

This sequence belongs to the GTP-binding SRP family. SRP54 subfamily. In terms of assembly, part of the signal recognition particle protein translocation system, which is composed of SRP and FtsY. Archaeal SRP consists of a 7S RNA molecule of 300 nucleotides and two protein subunits: SRP54 and SRP19.

It localises to the cytoplasm. It carries out the reaction GTP + H2O = GDP + phosphate + H(+). Its function is as follows. Involved in targeting and insertion of nascent membrane proteins into the cytoplasmic membrane. Binds to the hydrophobic signal sequence of the ribosome-nascent chain (RNC) as it emerges from the ribosomes. The SRP-RNC complex is then targeted to the cytoplasmic membrane where it interacts with the SRP receptor FtsY. In Methanothrix thermoacetophila (strain DSM 6194 / JCM 14653 / NBRC 101360 / PT) (Methanosaeta thermophila), this protein is Signal recognition particle 54 kDa protein.